Reading from the N-terminus, the 64-residue chain is Small ribosomal subunit protein bS21 (64 aa).

Residues 37-64 (EKPSVKRKRKEKEAQRRLRKKMRMMKKA) are disordered. Residues 53 to 64 (RLRKKMRMMKKA) are compositionally biased toward basic residues.

Belongs to the bacterial ribosomal protein bS21 family.

The polypeptide is Small ribosomal subunit protein bS21 (Syntrophotalea carbinolica (strain DSM 2380 / NBRC 103641 / GraBd1) (Pelobacter carbinolicus)).